The primary structure comprises 115 residues: Probable non-functional T cell receptor beta variable 7-1 (115 aa).

Positions 1–21 (MGTRLLCWAAICLLGADHTGA) are cleaved as a signal peptide. Positions 22-115 (GVSQSLRHKV…LAVYLCASSS (94 aa)) constitute an Ig-like domain.

Most probably, the alpha-beta TR is not assembled due to incorrect folding of the beta chain. Alpha-beta TR is a heterodimer composed of an alpha and beta chain; disulfide-linked. The alpha-beta TR is associated with the transmembrane signaling CD3 coreceptor proteins to form the TR-CD3 (TcR or TCR). The assembly of alpha-beta TR heterodimers with CD3 occurs in the endoplasmic reticulum where a single alpha-beta TR heterodimer associates with one CD3D-CD3E heterodimer, one CD3G-CD3E heterodimer and one CD247 homodimer forming a stable octameric structure. CD3D-CD3E and CD3G-CD3E heterodimers preferentially associate with TR alpha and TR beta chains, respectively. The association of the CD247 homodimer is the last step of TcR assembly in the endoplasmic reticulum and is required for transport to the cell surface.

It is found in the cell membrane. In terms of biological role, probable non-functional open reading frame (ORF) of V region of the variable domain of T cell receptor (TR) beta chain. Non-functional ORF generally cannot participate in the synthesis of a productive T cell receptor (TR) chain due to altered V-(D)-J or switch recombination and/or splicing site (at mRNA level) and/or conserved amino acid change (protein level). Alpha-beta T cell receptors are antigen specific receptors which are essential to the immune response and are present on the cell surface of T lymphocytes. Recognize peptide-major histocompatibility (MH) (pMH) complexes that are displayed by antigen presenting cells (APC), a prerequisite for efficient T cell adaptive immunity against pathogens. Binding of alpha-beta TR to pMH complex initiates TR-CD3 clustering on the cell surface and intracellular activation of LCK that phosphorylates the ITAM motifs of CD3G, CD3D, CD3E and CD247 enabling the recruitment of ZAP70. In turn ZAP70 phosphorylates LAT, which recruits numerous signaling molecules to form the LAT signalosome. The LAT signalosome propagates signal branching to three major signaling pathways, the calcium, the mitogen-activated protein kinase (MAPK) kinase and the nuclear factor NF-kappa-B (NF-kB) pathways, leading to the mobilization of transcription factors that are critical for gene expression and essential for T cell growth and differentiation. The T cell repertoire is generated in the thymus, by V-(D)-J rearrangement. This repertoire is then shaped by intrathymic selection events to generate a peripheral T cell pool of self-MH restricted, non-autoaggressive T cells. Post-thymic interaction of alpha-beta TR with the pMH complexes shapes TR structural and functional avidity. The sequence is that of Probable non-functional T cell receptor beta variable 7-1 from Homo sapiens (Human).